A 228-amino-acid chain; its full sequence is Ephrin-A5 (228 aa).

The N-terminal stretch at 1–20 (MLHVEMLTLLFLVLWMCVFS) is a signal peptide. An Ephrin RBD domain is found at 29–162 (ADRYAVYWNS…KLKVFVRPTN (134 aa)). A glycan (N-linked (GlcNAc...) asparagine) is linked at N37. 2 disulfide bridges follow: C62-C102 and C90-C151. N162 carries N-linked (GlcNAc...) asparagine; atypical glycosylation. A disordered region spans residues 186–205 (EPADDTVHESAEPSRGENAA). The segment covering 190–200 (DTVHESAEPSR) has biased composition (basic and acidic residues). The GPI-anchor amidated asparagine moiety is linked to residue N203. A propeptide spans 204–228 (AAQTPRIPSRLLAILLFLLAMLLTL) (removed in mature form).

Belongs to the ephrin family. As to quaternary structure, binds to the receptor tyrosine kinases EPHA2, EPHA3 and EPHB1. Forms a ternary EFNA5-EPHA3-ADAM10 complex mediating EFNA5 extracellular domain shedding by ADAM10 which regulates the EFNA5-EPHA3 complex internalization and function. Binds to EPHB2. Interacts with EPHA8; activates EPHA8. Expressed in myogenic progenitor cells.

The protein resides in the cell membrane. The protein localises to the membrane. It localises to the caveola. Its function is as follows. Cell surface GPI-bound ligand for Eph receptors, a family of receptor tyrosine kinases which are crucial for migration, repulsion and adhesion during neuronal, vascular and epithelial development. Binds promiscuously Eph receptors residing on adjacent cells, leading to contact-dependent bidirectional signaling into neighboring cells. The signaling pathway downstream of the receptor is referred to as forward signaling while the signaling pathway downstream of the ephrin ligand is referred to as reverse signaling. Induces compartmentalized signaling within a caveolae-like membrane microdomain when bound to the extracellular domain of its cognate receptor. This signaling event requires the activity of the Fyn tyrosine kinase. Activates the EPHA3 receptor to regulate cell-cell adhesion and cytoskeletal organization. With the receptor EPHA2 may regulate lens fiber cells shape and interactions and be important for lens transparency maintenance. May function actively to stimulate axon fasciculation. The interaction of EFNA5 with EPHA5 also mediates communication between pancreatic islet cells to regulate glucose-stimulated insulin secretion. Cognate/functional ligand for EPHA7, their interaction regulates brain development modulating cell-cell adhesion and repulsion. The polypeptide is Ephrin-A5 (Efna5) (Mus musculus (Mouse)).